Here is a 50-residue protein sequence, read N- to C-terminus: Large ribosomal subunit protein bL33 (50 aa).

The protein belongs to the bacterial ribosomal protein bL33 family.

In Koribacter versatilis (strain Ellin345), this protein is Large ribosomal subunit protein bL33.